We begin with the raw amino-acid sequence, 1064 residues long: MLGDGNEGMSTIPGLNQIQFEGFCRFIDQGLTEELSKFPKIEDTDQEIEFQLFMERYQLVEPLRKERDAVYESLTYSSEFYVSAGLIWKTSRDMQEQTILIGNIPLMNSLGTSIVKGIYRIVINQILQSPGIYYRSELDHNEISVYTGTIISDWGGRSELEIDRKARIWARVSRKQKISILVLSSAMGSNLKEILDNVFYPEIFLSFLKDKERKKIGSKENAILEFYQQFACVGGDPVFSESLCKELQTKFFQQRCELGRIGRRNMNRRLNLDIPQNNTFLLPRDILAAADHLIEQKFGMGTLDDMNHLKNKRIRSVADLLQDQLGLALVRLEDEVRETICGPIRHKWRTTPHPQNLVTSTPLTTTYESFFGSHPLSQVLDQTNPLTQIVHGRKWSYLDPGGLTGRTASFRIRDIHPSHYGRICPIDTSEGINVGLIGSLAIHAKIGHWGSLESPFYEISERSTGVQMLYLSPGRDEYYTVAAGNSLALNQDIQEEEVVPARYRQEFLTIAWEQVHFRSILPFQYFSIGASLIPFIEHNDANRALMSSNMQRQAVPLSRPEKCIVGTGLERQVALDSGALAIAEREGKIVSTDTEKILFSGNGDTLSIPLVMYQSSNKNTCMHQKPQVQRGKCIKKGQILADGAATVGGELALGKNVLVAYMPWEGYNSEDAVLISERLVYEDIYTSFHIRKYEIQTAGTERITNEIPHLEAHLLRNLDKNGIVMLGSWVETGAILVGKLTPEVVKESPANRLVYDIVGIQVSTSKDTCLKLPIGGRGRVIDVRWIQKRGDNDNPETIRIYISQKREIKVGDKVAGRHGNKGIISKILPRQDMPYLQDGRPVDMVFNPLGVPSRMNVGQIFECSLGLAGGLLDRHYRIVPFDERYEQEASRKLVFSELYEASKQTTNPWVFEPEYPGKSRIFDGRSGNPFEQPILIGKPYILKLIHQVDDKIHGRSVGNYTHITQQPLRGRAKGGGQRVGEMEVWALEGFGVAHILQEMLTYKSDHIRARQKIPGTTMIGGTIPNPEDAPESFRVLVRELRSLALELNHFLVSEKNFQINRKEA.

It belongs to the RNA polymerase beta chain family. In terms of assembly, in plastids the minimal PEP RNA polymerase catalytic core is composed of four subunits: alpha, beta, beta', and beta''. When a (nuclear-encoded) sigma factor is associated with the core the holoenzyme is formed, which can initiate transcription.

Its subcellular location is the plastid. The protein resides in the chloroplast. It catalyses the reaction RNA(n) + a ribonucleoside 5'-triphosphate = RNA(n+1) + diphosphate. In terms of biological role, DNA-dependent RNA polymerase catalyzes the transcription of DNA into RNA using the four ribonucleoside triphosphates as substrates. The polypeptide is DNA-directed RNA polymerase subunit beta (Jasminum nudiflorum (Winter jasmine)).